Consider the following 201-residue polypeptide: Ribonuclease HII (201 aa).

An RNase H type-2 domain is found at 12-201 (DLVAGVDEVG…VRELLDASVE (190 aa)). A divalent metal cation is bound by residues Asp-18, Glu-19, and Asp-110.

Belongs to the RNase HII family. Mn(2+) serves as cofactor. The cofactor is Mg(2+).

It is found in the cytoplasm. The enzyme catalyses Endonucleolytic cleavage to 5'-phosphomonoester.. In terms of biological role, endonuclease that specifically degrades the RNA of RNA-DNA hybrids. This chain is Ribonuclease HII, found in Pseudomonas paraeruginosa (strain DSM 24068 / PA7) (Pseudomonas aeruginosa (strain PA7)).